Here is a 283-residue protein sequence, read N- to C-terminus: Orotidine 5'-phosphate decarboxylase (283 aa).

Lys97 functions as the Proton donor in the catalytic mechanism.

This sequence belongs to the OMP decarboxylase family. Type 2 subfamily.

It catalyses the reaction orotidine 5'-phosphate + H(+) = UMP + CO2. Its pathway is pyrimidine metabolism; UMP biosynthesis via de novo pathway; UMP from orotate: step 2/2. This Clostridium botulinum (strain Kyoto / Type A2) protein is Orotidine 5'-phosphate decarboxylase.